Reading from the N-terminus, the 287-residue chain is Elongation factor Ts (287 aa).

Residues 80-83 form an involved in Mg(2+) ion dislocation from EF-Tu region; sequence TDFL.

The protein belongs to the EF-Ts family.

It localises to the cytoplasm. Associates with the EF-Tu.GDP complex and induces the exchange of GDP to GTP. It remains bound to the aminoacyl-tRNA.EF-Tu.GTP complex up to the GTP hydrolysis stage on the ribosome. The protein is Elongation factor Ts of Pseudomonas putida (strain W619).